A 154-amino-acid chain; its full sequence is Endoribonuclease YbeY (154 aa).

Positions 113, 117, and 123 each coordinate Zn(2+).

It belongs to the endoribonuclease YbeY family. Zn(2+) serves as cofactor.

Its subcellular location is the cytoplasm. Single strand-specific metallo-endoribonuclease involved in late-stage 70S ribosome quality control and in maturation of the 3' terminus of the 16S rRNA. The protein is Endoribonuclease YbeY of Vibrio cholerae serotype O1 (strain ATCC 39541 / Classical Ogawa 395 / O395).